We begin with the raw amino-acid sequence, 288 residues long: Beta-lactamase PSE-1 (288 aa).

Positions 1 to 17 (MKFLLAFSLLIPSVVFA) are cleaved as a signal peptide. Ser-65 acts as the Acyl-ester intermediate in catalysis. A disulfide bond links Cys-72 and Cys-118. 229–231 (RSG) contributes to the substrate binding site.

This sequence belongs to the class-A beta-lactamase family. In terms of assembly, monomer.

The catalysed reaction is a beta-lactam + H2O = a substituted beta-amino acid. With respect to regulation, inhibited by p-chloromercuribenzoate but not by cloxacillin. Functionally, hydrolyzes penicillin, ampicillin and carbenicillin but not other antibiotics including oxacillin, methicillin and cloxacillin. This Pseudomonas aeruginosa protein is Beta-lactamase PSE-1.